The primary structure comprises 267 residues: 4-hydroxy-tetrahydrodipicolinate reductase (267 aa).

NAD(+) contacts are provided by residues 12–17 (GARGRM), aspartate 38, 100–102 (GTT), and 126–129 (APNF). Histidine 156 acts as the Proton donor/acceptor in catalysis. A (S)-2,3,4,5-tetrahydrodipicolinate-binding site is contributed by histidine 157. Catalysis depends on lysine 160, which acts as the Proton donor. 166–167 (GT) is a (S)-2,3,4,5-tetrahydrodipicolinate binding site.

It belongs to the DapB family.

It is found in the cytoplasm. The enzyme catalyses (S)-2,3,4,5-tetrahydrodipicolinate + NAD(+) + H2O = (2S,4S)-4-hydroxy-2,3,4,5-tetrahydrodipicolinate + NADH + H(+). It carries out the reaction (S)-2,3,4,5-tetrahydrodipicolinate + NADP(+) + H2O = (2S,4S)-4-hydroxy-2,3,4,5-tetrahydrodipicolinate + NADPH + H(+). It participates in amino-acid biosynthesis; L-lysine biosynthesis via DAP pathway; (S)-tetrahydrodipicolinate from L-aspartate: step 4/4. Its function is as follows. Catalyzes the conversion of 4-hydroxy-tetrahydrodipicolinate (HTPA) to tetrahydrodipicolinate. This is 4-hydroxy-tetrahydrodipicolinate reductase from Bacillus pumilus (strain SAFR-032).